The sequence spans 258 residues: C4b-binding protein beta chain (258 aa).

The first 15 residues, 1–15, serve as a signal peptide directing secretion; it reads MLCLVVCCLIWLISA. One can recognise a Sushi 1; atypical; lacks a Cys domain in the interval 18–75; sequence GSCSEPPPVNNSVFVGKETEEQILGIYLCIKGYHLVGKKSLVFDPSKEWNSTLPECLL. N-linked (GlcNAc...) asparagine glycosylation is found at Asn-27, Asn-67, Asn-89, Asn-95, and Asn-114. Disulfide bonds link Cys-46–Cys-73, Cys-78–Cys-118, Cys-104–Cys-131, Cys-136–Cys-176, and Cys-162–Cys-188. 2 Sushi domains span residues 76-133 and 134-190; these read GHCP…ICRS and RDCE…TCES. Residue Asn-218 is glycosylated (N-linked (GlcNAc...) asparagine).

In terms of assembly, disulfide-linked complex of alpha and beta chains.

Its subcellular location is the secreted. Controls the classical pathway of complement activation. It binds as a cofactor to C3b/C4b inactivator (C3bINA), which then hydrolyzes the complement fragment C4b. It also accelerates the degradation of the C4bC2a complex (C3 convertase) by dissociating the complement fragment C2a. It also interacts with anticoagulant protein S and with serum amyloid P component. The protein is C4b-binding protein beta chain (C4bpb) of Rattus norvegicus (Rat).